Consider the following 142-residue polypeptide: Serine protease inhibitor (142 aa).

Serine 1 carries the N-acetylserine modification.

Serine protease inhibitor. Active against beta-trypsin and alpha-chymotrypsin with dissociation constants of 0.35 nM and 40 nM respectively. Inhibits factor XIa, but not other enzymes involved in coagulation and fibrinolysis. Does not inhibit subtilisin, lysyl endopeptidase, arginyl endopeptidase or papain. This chain is Serine protease inhibitor, found in Lentinula edodes (Shiitake mushroom).